Reading from the N-terminus, the 316-residue chain is Coiled-coil domain-containing protein 130 homolog (316 aa).

Residues 182-203 (ANSRLRAEFRQQKKEINGQQEL) adopt a coiled-coil conformation. Residues 287–316 (KLEETTSSATNEKPISLVGDYSSSDNDSNG) are disordered.

This sequence belongs to the CWC16 family.

The polypeptide is Coiled-coil domain-containing protein 130 homolog (Drosophila melanogaster (Fruit fly)).